Consider the following 270-residue polypeptide: MKMTNKKMKKELMERLARPEWEFHYDSEKDVLRIEQKDTKKGINVSLPGVVAKWEVKKEAAIEDVVYYVTEALLAMHKEENQSGKIFPVIRSTSFPKEAEEGNPFIMTEHTAETRIYYALDSNKTYRLIDERLLQKLGLTEQQVREMALFNVRSLNYEFKQDQVAGNTFYFLNTNDGYDASRILNESLLQSMREKISGDMVVAVPHQDVLIIADIMNEIGYDIIAQMTMKFFAEGHVPITSLSFIYEDGEFEPIFILAKNRKKTNGKEKG.

Belongs to the UPF0354 family.

This chain is UPF0354 protein Bcer98_3354, found in Bacillus cytotoxicus (strain DSM 22905 / CIP 110041 / 391-98 / NVH 391-98).